A 194-amino-acid polypeptide reads, in one-letter code: Probable GTP-binding protein EngB (194 aa).

Residues 22–194 (GKPEIALVGR…SVWEWITAHM (173 aa)) form the EngB-type G domain. GTP-binding positions include 30 to 37 (GRSNVGKS), 57 to 61 (GKTQT), 75 to 78 (DVPG), 142 to 145 (TKSD), and 175 to 177 (FSS). Ser-37 and Thr-59 together coordinate Mg(2+).

This sequence belongs to the TRAFAC class TrmE-Era-EngA-EngB-Septin-like GTPase superfamily. EngB GTPase family. It depends on Mg(2+) as a cofactor.

Functionally, necessary for normal cell division and for the maintenance of normal septation. The protein is Probable GTP-binding protein EngB of Leuconostoc citreum (strain KM20).